A 143-amino-acid chain; its full sequence is MAKKITGYIKLQVPAGKANPSPPIGPALGQRGVNIMEFCKAFNAKSQGMEPGTPLPTIITVYADRSFSFESKMPPVSYLLKKAINLKSGSKEPGKAVAGKIKRSQIVEIANTKMPDLNANDVEAATRIIEGSARAMGLEVVEG.

The protein belongs to the universal ribosomal protein uL11 family. As to quaternary structure, part of the ribosomal stalk of the 50S ribosomal subunit. Interacts with L10 and the large rRNA to form the base of the stalk. L10 forms an elongated spine to which L12 dimers bind in a sequential fashion forming a multimeric L10(L12)X complex. One or more lysine residues are methylated.

Its function is as follows. Forms part of the ribosomal stalk which helps the ribosome interact with GTP-bound translation factors. This Zymomonas mobilis subsp. mobilis (strain ATCC 31821 / ZM4 / CP4) protein is Large ribosomal subunit protein uL11.